A 203-amino-acid polypeptide reads, in one-letter code: ESCRT-related protein CHMP1B (203 aa).

Coiled-coil stretches lie at residues 13–51 and 109–140; these read DLKF…MDGA and GNLQ…NAMA. The interval 172–203 is disordered; the sequence is PQPAGHAIPTKTEEKVDEDDLSRRLAELKARG. The span at 192 to 203 shows a compositional bias: basic and acidic residues; the sequence is LSRRLAELKARG.

Belongs to the SNF7 family. As to quaternary structure, interacts with CHMP1A and LIP5. Interacts with VPS2.2.

The protein localises to the cytoplasm. Its subcellular location is the endosome membrane. In terms of biological role, involved in ESCRT-dependent multivesicular body (MVB) formation and sorting of endosomal cargo proteins into MVBs. Mediates the MVB sorting of the auxin carriers PIN1, PIN2 and AUX1. Required for embryonic axis establishment and seedling growth. Required for autophagic degradation of plastid proteins. Promotes the efficient sequestration of cargo from plastids into autophagosomes. Mediates the efficient delivery of autophagic plastid bodies to the vacuole, but not into the cytoplasm. The polypeptide is ESCRT-related protein CHMP1B (Arabidopsis thaliana (Mouse-ear cress)).